Consider the following 91-residue polypeptide: Uteroglobin (91 aa).

An N-terminal signal peptide occupies residues 1-21 (MKLAITLALVTLALLCSPASA).

The protein belongs to the secretoglobin family. As to quaternary structure, antiparallel homodimer; disulfide-linked. Interaction with LMBR1L is controversial. In terms of tissue distribution, synthesized in the uterus and lung.

The protein localises to the secreted. Uteroglobin binds progesterone specifically and with high affinity. It may regulate progesterone concentrations reaching the blastocyst. It is also a potent inhibitor of phospholipase A2. The protein is Uteroglobin (SCGB1A1) of Oryctolagus cuniculus (Rabbit).